The sequence spans 528 residues: Exodeoxyribonuclease 7 large subunit (528 aa).

A disordered region spans residues 486–528; the sequence is QGDRDAVIDGESSGVLPPSAAPAPTRPTPRPKPASSSDQGSLF. The segment covering 504–517 has biased composition (pro residues); sequence SAAPAPTRPTPRPK.

This sequence belongs to the XseA family. As to quaternary structure, heterooligomer composed of large and small subunits.

It is found in the cytoplasm. It catalyses the reaction Exonucleolytic cleavage in either 5'- to 3'- or 3'- to 5'-direction to yield nucleoside 5'-phosphates.. In terms of biological role, bidirectionally degrades single-stranded DNA into large acid-insoluble oligonucleotides, which are then degraded further into small acid-soluble oligonucleotides. This is Exodeoxyribonuclease 7 large subunit from Caulobacter sp. (strain K31).